Reading from the N-terminus, the 90-residue chain is Progonadoliberin-3 (90 aa).

Residues 1–23 (MEANSRVMVRVLLLALVVQVTLS) form the signal peptide. Gln24 is modified (pyrrolidone carboxylic acid). A Glycine amide modification is found at Gly33. Residues 56–90 (LPEEASAQTQERLRPYNVINDDSSHFDRKKRSPNK) are disordered.

Belongs to the GnRH family.

It localises to the secreted. Stimulates the secretion of gonadotropins. This chain is Progonadoliberin-3 (gnrh3), found in Dicentrarchus labrax (European seabass).